Here is a 362-residue protein sequence, read N- to C-terminus: Oxygen-dependent coproporphyrinogen-III oxidase (362 aa).

A disordered region spans residues 12–31; that stretch reads RQENDQSTPQLELPPTDSRD. Serine 118 is a substrate binding site. A divalent metal cation-binding residues include histidine 122 and histidine 132. The active-site Proton donor is histidine 132. 134 to 136 serves as a coordination point for substrate; that stretch reads NYR. A divalent metal cation-binding residues include histidine 166 and histidine 196. The segment at 286 to 321 is important for dimerization; sequence YVEFNLVWDRGTIFGLQTNGRTESILMSLPPLVRWE.

It belongs to the aerobic coproporphyrinogen-III oxidase family. Homodimer. The cofactor is a divalent metal cation.

The protein localises to the cytoplasm. It catalyses the reaction coproporphyrinogen III + O2 + 2 H(+) = protoporphyrinogen IX + 2 CO2 + 2 H2O. The protein operates within porphyrin-containing compound metabolism; protoporphyrin-IX biosynthesis; protoporphyrinogen-IX from coproporphyrinogen-III (O2 route): step 1/1. In terms of biological role, involved in the heme and chlorophyll biosynthesis. Catalyzes the aerobic oxidative decarboxylation of propionate groups of rings A and B of coproporphyrinogen-III to yield the vinyl groups in protoporphyrinogen-IX. The protein is Oxygen-dependent coproporphyrinogen-III oxidase of Synechococcus sp. (strain CC9902).